A 377-amino-acid chain; its full sequence is MTNTLQMTRRTMLTGAAVAGALTPILTSGGGNASPTPVRKLSATEIAALPRRKLDLVKPPFVHVHTQKAEGGPKVVEVTLTIEEKKLVIDGKGTEVNAMTFDGSVPGPLIVVHQDDYVEVTLVNPETNTLQHNIDFHSATGALGGGALTVVNPGESAVLRFKATKAGVFVYHCAPPGMVPWHVTSGMNGAIMVLPREGLTDGHGKELVYDKVYYLGEQDFYIPRDEKGEFKKYDSPGEAYEDTVAVMRTLTPTHIVFNGAVGALTGENALTAAVGERVLIVHSQANRDTRPHLIGGHGEYVWRTGKFVNVPDRDQETWFIPGPTRGAAYYTFEQPGIYAYVNHNLIEAFELGAAAHFKVTGDWNDDLMTTVRSPSGS.

The segment at residues M1–P35 is a signal peptide (tat-type signal). Plastocyanin-like domains are found at residues M99–L194 and G259–T360. Residues H132, H137, H172, C173, H182, M187, and H343 each coordinate Cu cation.

Belongs to the multicopper oxidase family. Homotrimer. The cofactor is Cu(2+). Cu(+) is required as a cofactor. FAD serves as cofactor. Post-translationally, predicted to be exported by the Tat system. The position of the signal peptide cleavage has not been experimentally proven.

The protein resides in the periplasm. It catalyses the reaction nitric oxide + Fe(III)-[cytochrome c] + H2O = Fe(II)-[cytochrome c] + nitrite + 2 H(+). It participates in nitrogen metabolism; nitrate reduction (denitrification); dinitrogen from nitrate: step 2/4. This is Copper-containing nitrite reductase (nirK) from Rhizobium sullae (Rhizobium hedysari).